The chain runs to 487 residues: Betaine aldehyde dehydrogenase (487 aa).

Residues serine 26, isoleucine 27, and aspartate 93 each contribute to the K(+) site. Residue 150 to 152 (GAW) coordinates NAD(+). The Charge relay system role is filled by lysine 162. Residues 176–179 (KPSE) and 229–232 (SVPT) contribute to the NAD(+) site. Residue leucine 244 participates in K(+) binding. The active-site Proton acceptor is glutamate 250. Positions 252, 284, and 384 each coordinate NAD(+). The active-site Nucleophile is cysteine 284. A Cysteine sulfenic acid (-SOH) modification is found at cysteine 284. K(+) contacts are provided by lysine 454 and glycine 457. Residue glutamate 461 is the Charge relay system of the active site.

This sequence belongs to the aldehyde dehydrogenase family. Dimer of dimers. K(+) is required as a cofactor.

It catalyses the reaction betaine aldehyde + NAD(+) + H2O = glycine betaine + NADH + 2 H(+). It participates in amine and polyamine biosynthesis; betaine biosynthesis via choline pathway; betaine from betaine aldehyde: step 1/1. Involved in the biosynthesis of the osmoprotectant glycine betaine. Catalyzes the irreversible oxidation of betaine aldehyde to the corresponding acid. The sequence is that of Betaine aldehyde dehydrogenase from Sinorhizobium fredii (strain NBRC 101917 / NGR234).